The chain runs to 170 residues: CKLMAFSSINHLGWMLLAMMNNELLWMTYFLLYSLLSISIIMMFNNFKLFYFNQIFNISMMNPIIKFLIFLNLLSLGGLPPFLGFLPKWLVIQNLTSMNQLFILTISVCLTLITLYFYLRLSYSIFMLNYQKNTWMLKNIYSMKMSSMSLILNFISIGGLLMILMFYMIL.

4 helical membrane-spanning segments follow: residues 24-44 (LLWMTYFLLYSLLSISIIMMF), 67-87 (FLIFLNLLSLGGLPPFLGFLP), 101-121 (LFILTISVCLTLITLYFYLRL), and 150-170 (LILNFISIGGLLMILMFYMIL).

It belongs to the complex I subunit 2 family.

It is found in the mitochondrion inner membrane. The catalysed reaction is a ubiquinone + NADH + 5 H(+)(in) = a ubiquinol + NAD(+) + 4 H(+)(out). Its function is as follows. Core subunit of the mitochondrial membrane respiratory chain NADH dehydrogenase (Complex I) that is believed to belong to the minimal assembly required for catalysis. Complex I functions in the transfer of electrons from NADH to the respiratory chain. The immediate electron acceptor for the enzyme is believed to be ubiquinone. The protein is NADH-ubiquinone oxidoreductase chain 2 (ND2) of Anopheles albimanus (New world malaria mosquito).